Here is a 269-residue protein sequence, read N- to C-terminus: Tryptophan synthase alpha chain (269 aa).

Catalysis depends on proton acceptor residues Glu49 and Asp60.

It belongs to the TrpA family. In terms of assembly, tetramer of two alpha and two beta chains.

The catalysed reaction is (1S,2R)-1-C-(indol-3-yl)glycerol 3-phosphate + L-serine = D-glyceraldehyde 3-phosphate + L-tryptophan + H2O. The protein operates within amino-acid biosynthesis; L-tryptophan biosynthesis; L-tryptophan from chorismate: step 5/5. In terms of biological role, the alpha subunit is responsible for the aldol cleavage of indoleglycerol phosphate to indole and glyceraldehyde 3-phosphate. This chain is Tryptophan synthase alpha chain, found in Acidovorax ebreus (strain TPSY) (Diaphorobacter sp. (strain TPSY)).